We begin with the raw amino-acid sequence, 66 residues long: Beta-mammal toxin Cv2 (66 aa).

Residues 1-66 (KEGYIVNHST…VWPLPKKTCN (66 aa)) form the LCN-type CS-alpha/beta domain. 4 disulfide bridges follow: Cys-12-Cys-65, Cys-16-Cys-41, Cys-25-Cys-46, and Cys-29-Cys-48.

As to expression, expressed by the venom gland.

It is found in the secreted. Its activity is regulated as follows. Is susceptible to be slightly neutralized by human antibodies scFvs 10FG2. Functionally, beta toxins bind voltage-independently at site-4 of sodium channels (Nav) and reduces peak current and shifts the voltage of activation toward more negative potentials thereby affecting sodium channel activation and promoting spontaneous and repetitive firing. This toxin is slightly toxic to mice. This Centruroides villegasi (Scorpion) protein is Beta-mammal toxin Cv2.